Reading from the N-terminus, the 140-residue chain is Holo-[acyl-carrier-protein] synthase (140 aa).

Residues Asp-7 and Glu-58 each contribute to the Mg(2+) site.

The protein belongs to the P-Pant transferase superfamily. AcpS family. Mg(2+) serves as cofactor.

It is found in the cytoplasm. It carries out the reaction apo-[ACP] + CoA = holo-[ACP] + adenosine 3',5'-bisphosphate + H(+). Transfers the 4'-phosphopantetheine moiety from coenzyme A to a Ser of acyl-carrier-protein. In Chloroflexus aggregans (strain MD-66 / DSM 9485), this protein is Holo-[acyl-carrier-protein] synthase.